Reading from the N-terminus, the 334-residue chain is Cathepsin J (334 aa).

A signal peptide spans methionine 1–glycine 17. The propeptide at alanine 18–glycine 113 is activation peptide. Cysteine 138 is an active-site residue. N-linked (GlcNAc...) asparagine glycosylation is found at asparagine 217, asparagine 221, and asparagine 268. Cysteine 269 and cysteine 322 form a disulfide bridge. Residue histidine 276 is part of the active site. Asparagine 288 carries an N-linked (GlcNAc...) asparagine glycan. Residue asparagine 300 is part of the active site.

It belongs to the peptidase C1 family. In terms of tissue distribution, expressed specifically in placenta.

It localises to the lysosome. This chain is Cathepsin J (Ctsj), found in Rattus norvegicus (Rat).